We begin with the raw amino-acid sequence, 354 residues long: N-acetyl-gamma-glutamyl-phosphate reductase (354 aa).

Cys-156 is a catalytic residue.

This sequence belongs to the NAGSA dehydrogenase family. Type 1 subfamily.

Its subcellular location is the cytoplasm. The catalysed reaction is N-acetyl-L-glutamate 5-semialdehyde + phosphate + NADP(+) = N-acetyl-L-glutamyl 5-phosphate + NADPH + H(+). The protein operates within amino-acid biosynthesis; L-arginine biosynthesis; N(2)-acetyl-L-ornithine from L-glutamate: step 3/4. Functionally, catalyzes the NADPH-dependent reduction of N-acetyl-5-glutamyl phosphate to yield N-acetyl-L-glutamate 5-semialdehyde. This Bordetella bronchiseptica (strain ATCC BAA-588 / NCTC 13252 / RB50) (Alcaligenes bronchisepticus) protein is N-acetyl-gamma-glutamyl-phosphate reductase.